The primary structure comprises 1840 residues: Sodium channel protein type 4 subunit alpha (1840 aa).

Topologically, residues 1–131 (MASSSLPNLV…RVAIKVLIHA (131 aa)) are cytoplasmic. Residues 36-60 (EARLQRNKQMEIEEPERKPRSDLEA) are compositionally biased toward basic and acidic residues. The tract at residues 36-63 (EARLQRNKQMEIEEPERKPRSDLEAGKN) is disordered. The I repeat unit spans residues 113–448 (LLSPFSIVRR…VVAMAYAEQN (336 aa)). A helical transmembrane segment spans residues 132-150 (LFSMFIMITILTNCVFMTM). At 151 to 157 (SNPPSWS) the chain is on the extracellular side. Residues 158–178 (KHVEYTFTGIYTFESLIKMLA) form a helical membrane-spanning segment. At 179 to 192 (RGFCIDDFTFLRDP) the chain is on the cytoplasmic side. Residues 193–210 (WNWLDFSVITMAYVTEFV) form a helical membrane-spanning segment. Residues 211–216 (DLGNIS) lie on the Extracellular side of the membrane. The helical transmembrane segment at 217-233 (ALRTFRVLRALKTITVI) threads the bilayer. Over 234–252 (PGLKTIVGALIQSVKKLSD) the chain is Cytoplasmic. A helical transmembrane segment spans residues 253-272 (VMILTVFCLSVFALVGLQLF). Over 273 to 385 (MGNLRQKCVR…PNYGYTSYDT (113 aa)) the chain is Extracellular. A disulfide bridge links C280 with C354. N-linked (GlcNAc...) asparagine glycans are attached at residues N288, N291, N297, N303, N309, N315, N327, and N356. C363 and C369 are disulfide-bonded. Positions 386-410 (FSWAFLALFRLMTQDYWENLFQLTL) form an intramembrane region, pore-forming. At 411 to 417 (RAAGKTY) the chain is on the extracellular side. The chain crosses the membrane as a helical span at residues 418 to 438 (MIFFVVIIFLGSFYLINLILA). The Cytoplasmic portion of the chain corresponds to 439–572 (VVAMAYAEQN…HIIYLIVMDP (134 aa)). The disordered stretch occupies residues 481–522 (AAQALESGEEADGDPTHNKDCNGSLDASGEKGPPRPSCSADS). Phosphoserine is present on S487. The II repeat unit spans residues 554–826 (CCAPWVKFKH…QIAIGRIKWG (273 aa)). Residues 573–591 (FVDLGITICIVLNTLFMAM) form a helical membrane-spanning segment. Topologically, residues 592–602 (EHYPMTEHFDN) are extracellular. Residues 603–622 (VLSVGNLVFTGIFTAEMVLK) traverse the membrane as a helical segment. Residues 623–636 (LIAMDPYEYFQQGW) lie on the Cytoplasmic side of the membrane. A helical transmembrane segment spans residues 637–656 (NIFDSFIVTLSLVELGLANV). Over 657 to 658 (QG) the chain is Extracellular. The helical transmembrane segment at 659–676 (LSVLRSFRLLRVFKLAKS) threads the bilayer. Over 677–692 (WPTLNMLIKIIGNSVG) the chain is Cytoplasmic. Residues 693 to 711 (ALGNLTLVLAIIVFIFAVV) traverse the membrane as a helical segment. At 712–740 (GMQLFGKSYKECVCKIASDCNLPRWHMND) the chain is on the extracellular side. A disulfide bond links C725 and C731. Residues 741 to 761 (FFHSFLIVFRILCGEWIETMW) constitute an intramembrane region (pore-forming). Residues 762–772 (DCMEVAGQAMC) are Extracellular-facing. A disulfide bond links C763 and C772. The chain crosses the membrane as a helical span at residues 773–791 (LTVFLMVMVIGNLVVLNLF). The Cytoplasmic portion of the chain corresponds to 792–1025 (LALLLSSFSA…ACFKIVEHNW (234 aa)). 2 disordered regions span residues 854–884 (EPGG…LKDN) and 925–983 (DLEM…GEQP). The segment covering 868–884 (EDEKKEPPPEDKELKDN) has biased composition (basic and acidic residues). Acidic residues-rich tracts occupy residues 925 to 940 (DLEM…FSEP) and 968 to 983 (EDPE…GEQP). The III repeat unit spans residues 1006 to 1319 (RGKMWWTLRR…KKYYNAMKKL (314 aa)). Residues 1026–1043 (FETFIVFMILLSSGALAF) traverse the membrane as a helical segment. Over 1044–1056 (EDIYIEQRRVIRT) the chain is Extracellular. A helical membrane pass occupies residues 1057-1075 (ILEYADKVFTYIFILEMLL). At 1076–1089 (KWVAYGFKVYFTNA) the chain is on the cytoplasmic side. Residues 1090–1108 (WCWLDFLIVDVSIISLVAN) form a helical membrane-spanning segment. Residues 1109 to 1116 (WLGYSELG) lie on the Extracellular side of the membrane. A helical transmembrane segment spans residues 1117–1135 (PIKSLRTLRALRPLRALSR). Residues 1136-1152 (FEGMRVVVNALLGAIPS) lie on the Cytoplasmic side of the membrane. Residues 1153-1172 (IMNVLLVCLIFWLIFSIMGV) traverse the membrane as a helical segment. The Extracellular segment spans residues 1173-1223 (NLFAGKFYYCVNTTTSERFDISVVNNKSESESLMYTGQVRWMNVKVNYDNV). N1198 is a glycosylation site (N-linked (GlcNAc...) asparagine). The pore-forming intramembrane region spans 1224–1245 (GLGYLSLLQVATFKGWMDIMYA). Residues 1246–1262 (AVDSREKEEQPHYEVNL) lie on the Extracellular side of the membrane. A helical transmembrane segment spans residues 1263–1284 (YMYLYFVIFIIFGSFFTLNLFI). Residues 1285-1347 (GVIIDNFNQQ…MVYDFVTKQV (63 aa)) are Cytoplasmic-facing. The tract at residues 1303-1305 (IFM) is important for rapid channel inactivation. Residues 1328–1626 (IPRPQNKIQG…WEKFDPDATQ (299 aa)) form an IV repeat. The helical transmembrane segment at 1348–1365 (FDISIMILICLNMVTMMV) threads the bilayer. Topologically, residues 1366 to 1376 (ETDDQSQLKVD) are extracellular. The helical transmembrane segment at 1377–1395 (ILYNINMVFIIIFTGECVL) threads the bilayer. The Cytoplasmic segment spans residues 1396–1407 (KMFALRHYYFTI). A helical transmembrane segment spans residues 1408 to 1425 (GWNIFDFVVVILSIVGLA). The Extracellular portion of the chain corresponds to 1426–1438 (LSDLIQKYFVSPT). Residues 1439–1455 (LFRVIRLARIGRVLRLI) traverse the membrane as a helical segment. The Cytoplasmic segment spans residues 1456–1474 (RGAKGIRTLLFALMMSLPA). The helical transmembrane segment at 1475–1492 (LFNIGLLLFLVMFIYSIF) threads the bilayer. Over 1493–1514 (GMSNFAYVKKESGIDDMFNFET) the chain is Extracellular. Positions 1515–1537 (FGNSIICLFEITTSAGWDGLLNP) form an intramembrane region, pore-forming. Residues 1538-1567 (ILNSGPPDCDPTLENPGTNVRGDCGNPSIG) lie on the Extracellular side of the membrane. Residues C1546 and C1561 are joined by a disulfide bond. A helical transmembrane segment spans residues 1568-1590 (ICFFCSYIIISFLIVVNMYIAII). Over 1591 to 1840 (LENFNVATEE…VRPGVKESLV (250 aa)) the chain is Cytoplasmic. One can recognise an IQ domain in the interval 1720–1749 (EEVCAIKIQRAYRRHLLQRSVKQASYMYRH). Positions 1775–1840 (HEKEGDGVQS…VRPGVKESLV (66 aa)) are disordered. The span at 1804–1813 (PTSSSDTALT) shows a compositional bias: low complexity. The span at 1814 to 1824 (PSPPPLPPSSS) shows a compositional bias: pro residues.

This sequence belongs to the sodium channel (TC 1.A.1.10) family. Nav1.4/SCN4A subfamily. As to quaternary structure, the Nav1.4 voltage-gated sodium channel consists of an ion-conducting alpha subunit SCN4A which is functional on its own and a regulatory beta subunit SCN1B. SCN1B strongly enhances the presence of SCN4A at the cell surface. SCN1B is also required for rapid channel inactivation and recovery after inactivation. It prevents the decrease of channel activity in response to repetitive, high-frequency depolarizations. Interacts with the syntrophins SNTA1, SNTB1 and SNTB2 (via PDZ domain); probably links SCN4A to the actin cytoskeleton and the extracellular matrix via the dystrophin-associated protein complex and regulates its localization in muscle cells. Interacts with TMEM233; probable regulator of the channel. In terms of tissue distribution, detected in skeletal muscle.

Its subcellular location is the cell membrane. It catalyses the reaction Na(+)(in) = Na(+)(out). Its activity is regulated as follows. Potently inhibited by tetrodotoxin and saxitoxin. Inhibited by the conotoxin GVIIJ. Functionally, pore-forming subunit of Nav1.4, a voltage-gated sodium (Nav) channel that directly mediates the depolarizing phase of action potentials in excitable membranes. Navs, also called VGSCs (voltage-gated sodium channels) or VDSCs (voltage-dependent sodium channels), operate by switching between closed and open conformations depending on the voltage difference across the membrane. In the open conformation they allow Na(+) ions to selectively pass through the pore, along their electrochemical gradient. The influx of Na+ ions provokes membrane depolarization, initiating the propagation of electrical signals throughout cells and tissues. Highly expressed in skeletal muscles, Nav1.4 generates the action potential crucial for muscle contraction. The protein is Sodium channel protein type 4 subunit alpha of Rattus norvegicus (Rat).